The primary structure comprises 290 residues: L-fucono-1,5-lactonase (290 aa).

This sequence belongs to the metallo-dependent hydrolases superfamily.

The enzyme catalyses L-fucono-1,5-lactone + H2O = L-fuconate + H(+). The catalysed reaction is L-fucono-1,4-lactone + H2O = L-fuconate + H(+). It catalyses the reaction D-arabinono-1,4-lactone + H2O = D-arabinonate + H(+). It carries out the reaction L-xylono-1,4-lactone + H2O = L-xylonate + H(+). The enzyme catalyses L-galactono-1,4-lactone + H2O = L-galactonate + H(+). Functionally, catalyzes the hydrolysis of L-fucono-1,5-lactone to L-fuconate. Can also hydrolyze L-fucono-1,4-lactone, L-galactono-1,4-lactone D-arabinono-1,4-lactone and L-xylono-1,4-lactone. The chain is L-fucono-1,5-lactonase from Burkholderia ambifaria (strain ATCC BAA-244 / DSM 16087 / CCUG 44356 / LMG 19182 / AMMD) (Burkholderia cepacia (strain AMMD)).